The sequence spans 165 residues: Cyclic pyranopterin monophosphate synthase (165 aa).

Substrate-binding positions include 83 to 85 (FCH) and 120 to 121 (ME). Asp135 is a catalytic residue.

Belongs to the MoaC family. In terms of assembly, homohexamer; trimer of dimers.

It carries out the reaction (8S)-3',8-cyclo-7,8-dihydroguanosine 5'-triphosphate = cyclic pyranopterin phosphate + diphosphate. It participates in cofactor biosynthesis; molybdopterin biosynthesis. In terms of biological role, catalyzes the conversion of (8S)-3',8-cyclo-7,8-dihydroguanosine 5'-triphosphate to cyclic pyranopterin monophosphate (cPMP). This Xanthomonas axonopodis pv. citri (strain 306) protein is Cyclic pyranopterin monophosphate synthase.